A 604-amino-acid chain; its full sequence is Threonine--tRNA ligase (604 aa).

Residues 209–500 form a catalytic region; sequence DHRKLGQEMG…LTEHFGGEFP (292 aa). Zn(2+) is bound by residues Cys301, His352, and His477.

The protein belongs to the class-II aminoacyl-tRNA synthetase family. In terms of assembly, homodimer. It depends on Zn(2+) as a cofactor.

The protein localises to the cytoplasm. It catalyses the reaction tRNA(Thr) + L-threonine + ATP = L-threonyl-tRNA(Thr) + AMP + diphosphate + H(+). In terms of biological role, catalyzes the attachment of threonine to tRNA(Thr) in a two-step reaction: L-threonine is first activated by ATP to form Thr-AMP and then transferred to the acceptor end of tRNA(Thr). Also edits incorrectly charged L-seryl-tRNA(Thr). This is Threonine--tRNA ligase from Helicobacter hepaticus (strain ATCC 51449 / 3B1).